The primary structure comprises 204 residues: Ubiquitin-conjugating enzyme E2 S (204 aa).

The 147-residue stretch at Gln-14–Lys-160 folds into the UBC core domain. The active-site Glycyl thioester intermediate is the Cys-98. Polar residues predominate over residues Ser-165 to Ser-176. Positions Ser-165–Leu-204 are disordered. Residues Asp-191–Leu-204 show a composition bias toward basic residues.

The protein belongs to the ubiquitin-conjugating enzyme family.

It catalyses the reaction S-ubiquitinyl-[E1 ubiquitin-activating enzyme]-L-cysteine + [E2 ubiquitin-conjugating enzyme]-L-cysteine = [E1 ubiquitin-activating enzyme]-L-cysteine + S-ubiquitinyl-[E2 ubiquitin-conjugating enzyme]-L-cysteine.. The protein operates within protein modification; protein ubiquitination. Catalyzes the covalent attachment of ubiquitin to other proteins. Acts as an essential factor of the anaphase promoting complex/cyclosome (APC/C), a cell cycle-regulated ubiquitin ligase that controls progression through mitosis. Acts by specifically elongating polyubiquitin chains initiated by the E2 enzyme UBCH10 on APC/C substrates, enhancing the degradation of APC/C substrates by the proteasome and promoting mitotic exit. The protein is Ubiquitin-conjugating enzyme E2 S of Nematostella vectensis (Starlet sea anemone).